The sequence spans 357 residues: MADEQALRQGWTTGACATAAAKAACCALLGDGFPDPVGIDLPGGRTPAFALALAEMGEGWARAGIVKDAGDDPDVTHGATIIATLRHGIAGAGLVFRAGRGVGIVTRPGLPLAVGEPAINPVPRRLMAEAVAAIAARHGMACDLEIEISVPGGEDIALRTWNPRLGILGGISILGTTGVVIPYSCSAWIHSIQRGIDVARACGLIHVAGCVGSTSEKAVRKVRGLGEEAIIDMGDFAGGMLKYLRRHPIPRVTIAGGFAKMCKLAAGQMDLHSSRSQVDMVWLAAQLRSLGADAALVAASAQANTALEVLELAEGFPLGQAIARQARAAAREVLDNPEVSLDVLVVDRQGRVIGDAH.

This sequence belongs to the CbiD family.

It catalyses the reaction Co-precorrin-5B + S-adenosyl-L-methionine = Co-precorrin-6A + S-adenosyl-L-homocysteine. Its pathway is cofactor biosynthesis; adenosylcobalamin biosynthesis; cob(II)yrinate a,c-diamide from sirohydrochlorin (anaerobic route): step 6/10. Its function is as follows. Catalyzes the methylation of C-1 in cobalt-precorrin-5B to form cobalt-precorrin-6A. This is Cobalt-precorrin-5B C(1)-methyltransferase from Paramagnetospirillum magneticum (strain ATCC 700264 / AMB-1) (Magnetospirillum magneticum).